The following is a 74-amino-acid chain: MLEGAKSIGAGAATIASAGAAIGIGNVFSSLIHSVARNPSLAKQSFGYAILGFALTEAIALFAPMMAFLILFVF.

The next 2 membrane-spanning stretches (helical) occupy residues 8-28 and 50-70; these read IGAG…GNVF and ILGF…AFLI.

Belongs to the ATPase C chain family. As to quaternary structure, F-type ATPases have 2 components, CF(1) - the catalytic core - and CF(0) - the membrane proton channel. CF(1) has five subunits: alpha(3), beta(3), gamma(1), delta(1), epsilon(1). CF(0) has three main subunits: a, b and c.

The protein localises to the mitochondrion membrane. Its function is as follows. This protein is one of the chains of the nonenzymatic membrane component (F0) of mitochondrial ATPase. The chain is ATP synthase subunit 9, mitochondrial (ATP9) from Brassica napus (Rape).